Reading from the N-terminus, the 453-residue chain is Pup--protein ligase (453 aa).

Glu-9 serves as a coordination point for Mg(2+). Residue Arg-53 participates in ATP binding. Position 55 (Tyr-55) interacts with Mg(2+). Asp-57 acts as the Proton acceptor in catalysis. Mg(2+) is bound at residue Glu-63. ATP contacts are provided by Thr-66 and Trp-420.

This sequence belongs to the Pup ligase/Pup deamidase family. Pup-conjugating enzyme subfamily.

It carries out the reaction ATP + [prokaryotic ubiquitin-like protein]-L-glutamate + [protein]-L-lysine = ADP + phosphate + N(6)-([prokaryotic ubiquitin-like protein]-gamma-L-glutamyl)-[protein]-L-lysine.. The protein operates within protein degradation; proteasomal Pup-dependent pathway. It functions in the pathway protein modification; protein pupylation. In terms of biological role, catalyzes the covalent attachment of the prokaryotic ubiquitin-like protein modifier Pup to the proteasomal substrate proteins, thereby targeting them for proteasomal degradation. This tagging system is termed pupylation. The ligation reaction involves the side-chain carboxylate of the C-terminal glutamate of Pup and the side-chain amino group of a substrate lysine. The sequence is that of Pup--protein ligase from Streptomyces avermitilis (strain ATCC 31267 / DSM 46492 / JCM 5070 / NBRC 14893 / NCIMB 12804 / NRRL 8165 / MA-4680).